A 488-amino-acid polypeptide reads, in one-letter code: Zinc finger protein 92 (488 aa).

A KRAB domain is found at 14 to 85 (VSFEDVSVYF…DDGMESAARS (72 aa)). 6 consecutive C2H2-type zinc fingers follow at residues 141–163 (YLCQ…RIIH), 169–191 (YECS…QRIH), 197–219 (YECG…QVIH), 225–247 (FVCR…TRIH), 253–275 (FECT…QRIH), and 281–303 (YICK…QLIH). The C2H2-type 7; degenerate zinc finger occupies 309-331 (FTCHEYGKAFRGLSGLSQHQRVH). Residues 337–359 (YECSECGRAFGRRANLFKHQVVH) form a C2H2-type 8 zinc finger. Residues 387 to 408 (QQPQEAGEGSSAEPQPIDTNEK) are disordered. The C2H2-type 9 zinc finger occupies 410–432 (QVCERCGQVFENKLLLCRHLRIH). A disordered region spans residues 435–488 (EDDKKQKPVISSTSVLEDKSLLSQHLEAQPTEESDSEGSVVFVYAEKPHGPSSP).

Belongs to the krueppel C2H2-type zinc-finger protein family. In terms of tissue distribution, highly expressed in pancreatic islets.

It localises to the nucleus. In terms of biological role, KRAB domain-containing zinc-finger protein that represses B1/Alu SINE transposable elements and modulates the transcription of nearby genes in a tissue-specific manner. It regulates glucose homeostasis and lipid metabolism by modulating the expression of the endocrine cell-defining transcription factor, MAFB, in pancreatic islets and, the fat metabolism regulator, ACACB, in adipose tissue and muscle. The sequence is that of Zinc finger protein 92 (Zfp92) from Mus musculus (Mouse).